The primary structure comprises 63 residues: Large ribosomal subunit protein uL29 (63 aa).

The protein belongs to the universal ribosomal protein uL29 family.

This chain is Large ribosomal subunit protein uL29, found in Flavobacterium psychrophilum (strain ATCC 49511 / DSM 21280 / CIP 103535 / JIP02/86).